Reading from the N-terminus, the 92-residue chain is SPbeta prophage-derived uncharacterized protein YopY (92 aa).

The polypeptide is SPbeta prophage-derived uncharacterized protein YopY (yopY) (Bacillus subtilis (strain 168)).